An 85-amino-acid polypeptide reads, in one-letter code: HssA/B-like protein 62 (85 aa).

Belongs to the hssA/B family.

This chain is HssA/B-like protein 62 (hssl62), found in Dictyostelium discoideum (Social amoeba).